The chain runs to 161 residues: Ubiquitin-conjugating enzyme E2Q-like protein 1 (161 aa).

Positions 1–154 (MKELQDIARL…VKTHEKYGWV (154 aa)) constitute a UBC core domain. The active-site Glycyl thioester intermediate is the cysteine 88.

It belongs to the ubiquitin-conjugating enzyme family. As to quaternary structure, interacts with FBXW7.

The protein resides in the nucleus. It catalyses the reaction S-ubiquitinyl-[E1 ubiquitin-activating enzyme]-L-cysteine + [E2 ubiquitin-conjugating enzyme]-L-cysteine = [E1 ubiquitin-activating enzyme]-L-cysteine + S-ubiquitinyl-[E2 ubiquitin-conjugating enzyme]-L-cysteine.. It functions in the pathway protein modification; protein ubiquitination. Its function is as follows. Probable E2 ubiquitin-protein ligase that catalyzes the covalent attachment of ubiquitin to target proteins. May facilitate the monoubiquitination and degradation of MTOR and CCNE1 through interaction with FBXW7. In Mus musculus (Mouse), this protein is Ubiquitin-conjugating enzyme E2Q-like protein 1 (Ube2ql1).